The chain runs to 334 residues: L-lactate dehydrogenase B-A chain (334 aa).

NAD(+)-binding positions include 30 to 58 (GQVG…VEDR) and Arg-100. 3 residues coordinate substrate: Arg-107, Asn-139, and Arg-170. Position 139 (Asn-139) interacts with NAD(+). Catalysis depends on His-194, which acts as the Proton acceptor. Thr-249 provides a ligand contact to substrate.

It belongs to the LDH/MDH superfamily. LDH family. In terms of assembly, homotetramer.

It localises to the cytoplasm. The catalysed reaction is (S)-lactate + NAD(+) = pyruvate + NADH + H(+). The protein operates within fermentation; pyruvate fermentation to lactate; (S)-lactate from pyruvate: step 1/1. The polypeptide is L-lactate dehydrogenase B-A chain (ldhba) (Danio rerio (Zebrafish)).